Reading from the N-terminus, the 183-residue chain is Lipocalin (183 aa).

The first 20 residues, 1 to 20 (MKGLVLSFALVALSALCVYG), serve as a signal peptide directing secretion. C83 and C179 form a disulfide bridge.

The protein belongs to the calycin superfamily. Lipocalin family. In terms of assembly, monomer. Expressed mainly in choroid plexus. Much lower expression in other brain areas, and absent from liver.

It localises to the secreted. Functionally, might have a transport function across the blood brain barrier. Is supposed to have similar functions as a transthyretin which must have evolved after the stage of the amphibians in evolution. In Rhinella marina (Cane toad), this protein is Lipocalin.